The chain runs to 229 residues: Urease accessory protein UreF (229 aa).

Belongs to the UreF family. UreD, UreF and UreG form a complex that acts as a GTP-hydrolysis-dependent molecular chaperone, activating the urease apoprotein by helping to assemble the nickel containing metallocenter of UreC. The UreE protein probably delivers the nickel.

It is found in the cytoplasm. Required for maturation of urease via the functional incorporation of the urease nickel metallocenter. The protein is Urease accessory protein UreF of Staphylococcus aureus (strain bovine RF122 / ET3-1).